A 216-amino-acid polypeptide reads, in one-letter code: MARLNVNPTRMELTRLKKRLTTATRGHKLLKDKQDELMRRFIDLVKYNNELRKDVEEMIKNSLKDFVMARALMSSEILEEAIMYPKEKISLDVNIKNIMSVNVPEMKFKRLLEDDNGSIYPYGYSNTSAELDDAIEKLYSILPKLLELAEVEKSTQLMADEIEKTRRRVNALEYMTIPQLEETIKYIQMKLEENERGALTRLMKVKTMLEKEQESV.

The protein belongs to the V-ATPase D subunit family.

Produces ATP from ADP in the presence of a proton gradient across the membrane. The protein is V-type ATP synthase subunit D of Clostridium novyi (strain NT).